The sequence spans 407 residues: uncharacterized protein (407 aa).

Disordered regions lie at residues 1-62 (MTGR…NGDP) and 350-379 (SVTP…KPSS). Residues 17–30 (PVEKMPRFQREHGA) are compositionally biased toward basic and acidic residues.

This is an uncharacterized protein from Ictaluridae (bullhead catfishes).